A 654-amino-acid polypeptide reads, in one-letter code: Integrator complex subunit 9 (654 aa).

Positions 1, 2, 18, 19, 504, 508, and 509 each coordinate 1D-myo-inositol hexakisphosphate.

The protein belongs to the metallo-beta-lactamase superfamily. RNA-metabolizing metallo-beta-lactamase-like family. INTS9 subfamily. As to quaternary structure, belongs to the multiprotein complex Integrator, at least composed of IntS1, IntS2, IntS3, IntS4, omd/IntS5, IntS6, defl/IntS7, IntS8, IntS9, IntS10, IntS11, IntS12, asun/IntS13, IntS14 and IntS15. The core complex associates with protein phosphatase 2A subunits mts/PP2A and Pp2A-29B, to form the Integrator-PP2A (INTAC) complex. Within the complex, interacts with IntS1 and IntS12. IntS9 is part of the RNA endonuclease subcomplex, composed of IntS4, IntS9, IntS11 and inositol hexakisphosphate (InsP6).

The protein localises to the nucleus. It is found in the cytoplasm. Its subcellular location is the cytosol. In terms of biological role, component of the integrator complex, a multiprotein complex that terminates RNA polymerase II (Pol II) transcription in the promoter-proximal region of genes. The integrator complex provides a quality checkpoint during transcription elongation by driving premature transcription termination of transcripts that are unfavorably configured for transcriptional elongation: the complex terminates transcription by (1) catalyzing dephosphorylation of the C-terminal domain (CTD) of Pol II subunit Polr2A/Rbp1 and Spt5, and (2) degrading the exiting nascent RNA transcript via endonuclease activity. The integrator complex is also involved in the 3'-end processing of the U7 snRNA, and also the spliceosomal snRNAs U1, U2, U4 and U5. This chain is Integrator complex subunit 9, found in Drosophila melanogaster (Fruit fly).